The following is a 364-amino-acid chain: Probable dual-specificity RNA methyltransferase RlmN (364 aa).

Glutamate 106 serves as the catalytic Proton acceptor. The Radical SAM core domain maps to 112 to 350; that stretch reads YPRRNTVCIS…SCTVRDTRGR (239 aa). A disulfide bond links cysteine 119 and cysteine 356. Residues cysteine 126, cysteine 130, and cysteine 133 each coordinate [4Fe-4S] cluster. Residues 177-178, serine 211, 234-236, and asparagine 313 each bind S-adenosyl-L-methionine; these read GE and SLH. Cysteine 356 acts as the S-methylcysteine intermediate in catalysis.

The protein belongs to the radical SAM superfamily. RlmN family. The cofactor is [4Fe-4S] cluster.

It localises to the cytoplasm. It catalyses the reaction adenosine(2503) in 23S rRNA + 2 reduced [2Fe-2S]-[ferredoxin] + 2 S-adenosyl-L-methionine = 2-methyladenosine(2503) in 23S rRNA + 5'-deoxyadenosine + L-methionine + 2 oxidized [2Fe-2S]-[ferredoxin] + S-adenosyl-L-homocysteine. It carries out the reaction adenosine(37) in tRNA + 2 reduced [2Fe-2S]-[ferredoxin] + 2 S-adenosyl-L-methionine = 2-methyladenosine(37) in tRNA + 5'-deoxyadenosine + L-methionine + 2 oxidized [2Fe-2S]-[ferredoxin] + S-adenosyl-L-homocysteine. Specifically methylates position 2 of adenine 2503 in 23S rRNA and position 2 of adenine 37 in tRNAs. The polypeptide is Probable dual-specificity RNA methyltransferase RlmN (Mycobacterium bovis (strain ATCC BAA-935 / AF2122/97)).